We begin with the raw amino-acid sequence, 49 residues long: uncharacterized protein (49 aa).

This is an uncharacterized protein from Enterobacteria phage T4 (Bacteriophage T4).